The following is a 507-amino-acid chain: Histidine ammonia-lyase (507 aa).

The segment at residues 141 to 143 (ASG) is a cross-link (5-imidazolinone (Ala-Gly)). Serine 142 carries the post-translational modification 2,3-didehydroalanine (Ser).

Belongs to the PAL/histidase family. In terms of processing, contains an active site 4-methylidene-imidazol-5-one (MIO), which is formed autocatalytically by cyclization and dehydration of residues Ala-Ser-Gly.

It localises to the cytoplasm. It catalyses the reaction L-histidine = trans-urocanate + NH4(+). It functions in the pathway amino-acid degradation; L-histidine degradation into L-glutamate; N-formimidoyl-L-glutamate from L-histidine: step 1/3. This chain is Histidine ammonia-lyase, found in Cereibacter sphaeroides (strain KD131 / KCTC 12085) (Rhodobacter sphaeroides).